The primary structure comprises 384 residues: MPSPRIRKMSLSRALDKYLKTVSVHKKGHQQEFYRSNVIKRYPIALRNMDEITTVDIATYRDVRLAEINPRTGKPITGNTVRLELALLSSLFNIARVEWGTCRTNPVELVRKPKVSSGRDRRLTSSEERRLSRYFREKNLMLYVIFHLALETAMRQGEILALRWEHIDLRHGVAHLPETKNGHSRDVPLSRRARNFLQMMPVNLHGNVFDYTASGFKNAWRIATQRLRIEDLHFHDLRHEAISRFFELGSLNVMEIAAISGHRSMNMLKRYTHLRAWQLVSKLDARRRQTQKVAAWFVPYPAHITTIDEENGQKAHRIEIGDFDNLHVTATTKEEAVHRASEVLLRTLAIAAQKGERVPSPGALPVNDPDYIMICPLNPGSTPL.

The region spanning 9-96 (MSLSRALDKY…LLSSLFNIAR (88 aa)) is the Core-binding (CB) domain. Residues 118–284 (GRDRRLTSSE…RAWQLVSKLD (167 aa)) form the Tyr recombinase domain. Catalysis depends on residues R155, K180, H235, R238, and H262. Y271 functions as the O-(3'-phospho-DNA)-tyrosine intermediate in the catalytic mechanism.

This sequence belongs to the 'phage' integrase family.

Shufflon-specific DNA recombinase. This Escherichia coli protein is Shufflon-specific DNA recombinase (rci).